Here is a 668-residue protein sequence, read N- to C-terminus: Echinocandin B biosynthetic cluster protein J (668 aa).

5 disordered regions span residues 1 to 20 (MHFA…DQSL), 92 to 113 (YTPP…PPTP), 224 to 322 (PLDH…QSAD), 330 to 349 (EVAE…SIPT), and 483 to 506 (NCSS…PPLK). The segment covering 96–106 (SLDSRSSATPP) has biased composition (polar residues). Residues 264 to 275 (NPEPGTPTPPSP) are compositionally biased toward pro residues. Over residues 311 to 322 (YRSTPSPCQSAD) the composition is skewed to polar residues. The segment covering 484 to 494 (CSSSSCSSSAS) has biased composition (low complexity). The segment covering 495–505 (KKNEEKREPPL) has biased composition (basic and acidic residues).

It functions in the pathway antifungal biosynthesis. Functionally, part of the gene cluster that mediates the biosynthesis of echinocandin B, a fungal lipidated cyclic hexapeptide that acts as an antifungal agent. Linoleoyl-AMP, produced by the fatty-acyl-AMP ligase ecdI, is transferred to the initiation carrier domain (T0) of ecdA. The linoleoyl-S-phosphopantetheinyl-T0 is sequentially extended with L-ornithine, L-threonine, L-proline, L-homotyrosine, L-threonine, and 4R-methyl-L-proline to form the linear hexapeptide. Thereafter, the terminal condensation (C7) performs macrocyclization of the NRPS product and the cyclic scaffold is released from ecdA. All six of the amino acid residues are hydroxylated, including 4R,5R-dihydroxy-L-ornithine, 4R-hydroxyl-L-proline, 3S,4S-dihydroxy-L-homotyrosine, and 3S-hydroxyl-4S-methyl-L-prolin. In the pathway, all the hydroxylation reactions are proposed to occur following completion of the cyclic peptide, so the unhydroxylated precursor produced by ecdA will undergo six rounds of hydroxylation. Five hydroxylase genes (ecdG, ecdH, ecdK, htyE and htyF) are embedded within the echinocandin B (ecd) and L-homotyrosine (hty) clusters. This is Echinocandin B biosynthetic cluster protein J from Aspergillus rugulosus (Emericella rugulosa).